We begin with the raw amino-acid sequence, 625 residues long: Low affinity potassium transport system protein Kup (625 aa).

A run of 12 helical transmembrane segments spans residues 15–35 (TIFS…IYII), 58–78 (IIFW…IVSI), 103–123 (FVIV…IIII), 140–160 (LSFE…LFFI), 171–191 (IFSF…LKGI), 218–238 (FFVF…YINI), 251–271 (LFFV…IILL), 282–302 (FLVP…ISII), 340–360 (IYIP…ISIF), 366–386 (LILI…FFSL), 396–416 (FKIL…FIFI), and 422–442 (IICG…IMIT).

It belongs to the HAK/KUP transporter (TC 2.A.72) family.

Its subcellular location is the cell membrane. The catalysed reaction is K(+)(in) + H(+)(in) = K(+)(out) + H(+)(out). In terms of biological role, responsible for the low-affinity transport of potassium into the cell. Likely operates as a K(+):H(+) symporter. The polypeptide is Low affinity potassium transport system protein Kup (Wigglesworthia glossinidia brevipalpis).